Reading from the N-terminus, the 491-residue chain is UDP-N-acetylmuramate--L-alanine ligase (491 aa).

126–132 (GTHGKTT) is an ATP binding site.

This sequence belongs to the MurCDEF family.

It is found in the cytoplasm. It catalyses the reaction UDP-N-acetyl-alpha-D-muramate + L-alanine + ATP = UDP-N-acetyl-alpha-D-muramoyl-L-alanine + ADP + phosphate + H(+). It participates in cell wall biogenesis; peptidoglycan biosynthesis. Functionally, cell wall formation. The sequence is that of UDP-N-acetylmuramate--L-alanine ligase from Salmonella typhimurium (strain LT2 / SGSC1412 / ATCC 700720).